The following is a 175-amino-acid chain: Adenine phosphoribosyltransferase (175 aa).

It belongs to the purine/pyrimidine phosphoribosyltransferase family. Homodimer.

The protein resides in the cytoplasm. It catalyses the reaction AMP + diphosphate = 5-phospho-alpha-D-ribose 1-diphosphate + adenine. It functions in the pathway purine metabolism; AMP biosynthesis via salvage pathway; AMP from adenine: step 1/1. Its function is as follows. Catalyzes a salvage reaction resulting in the formation of AMP, that is energically less costly than de novo synthesis. The protein is Adenine phosphoribosyltransferase of Lacticaseibacillus paracasei (strain ATCC 334 / BCRC 17002 / CCUG 31169 / CIP 107868 / KCTC 3260 / NRRL B-441) (Lactobacillus paracasei).